The sequence spans 216 residues: Redox-sensing transcriptional repressor Rex (216 aa).

A DNA-binding region (H-T-H motif) is located at residues I17–F56. G91 to G96 is an NAD(+) binding site.

Belongs to the transcriptional regulatory Rex family. Homodimer.

It localises to the cytoplasm. Modulates transcription in response to changes in cellular NADH/NAD(+) redox state. In Leuconostoc citreum (strain KM20), this protein is Redox-sensing transcriptional repressor Rex.